We begin with the raw amino-acid sequence, 350 residues long: Xylene/toluene monooxygenase electron transfer component XylA (350 aa).

One can recognise a 2Fe-2S ferredoxin-type domain in the interval 16–108 (PESTVSVRGQ…DLEIELDTVL (93 aa)). [2Fe-2S] cluster contacts are provided by Cys-52, Cys-57, Cys-60, and Cys-92. The tract at residues 109–350 (GQALVPIETS…ADRFYNRPPC (242 aa)) is ferredoxin--NADH reductase. The 100-residue stretch at 114 to 213 (PIETSALISK…RAPYGQFGLH (100 aa)) folds into the FAD-binding FR-type domain.

It belongs to the bacterial ring-hydroxylating dioxygenase ferredoxin reductase family. In terms of assembly, monomer. The xylene/toluene monooxygenase is composed of two subunits: the electron transfer component XylA and the hydroxylase component XylM. FAD is required as a cofactor. The cofactor is [2Fe-2S] cluster.

The protein localises to the cell inner membrane. The enzyme catalyses 2 reduced [2Fe-2S]-[ferredoxin] + NAD(+) + H(+) = 2 oxidized [2Fe-2S]-[ferredoxin] + NADH. The reductase activity is completely inhibited by quercetin (a common inhibitor of mammalian oxidoreductases) and p-chloromercuribenzoate, but not by iodoacetimide, N-ethylmaleimide and pyrrazole. Its function is as follows. Component of a monooxygenase that catalyzes the first step in the degradation of xylenes and toluenes. XylA is responsible for the transport of electrons from the electron donor NADH to the terminal hydroxylase component, XylM. The polypeptide is Xylene/toluene monooxygenase electron transfer component XylA (Pseudomonas putida (Arthrobacter siderocapsulatus)).